A 140-amino-acid polypeptide reads, in one-letter code: MSRIFSSALQAVFKPSAFLPKTATRSFSILPSLRPATLSSTPSTIFRAPNAITAPSASPSATTGIDGEVLDLLSASSLISSHPALSGLGSQIRCGPRPTMSGATRLVQKRRHGFLSRVKTKNGQKTLKRRLAKGRLRLSA.

It belongs to the bacterial ribosomal protein bL34 family. As to quaternary structure, component of the mitochondrial large ribosomal subunit (mt-LSU). Mature N.crassa 74S mitochondrial ribosomes consist of a small (37S) and a large (54S) subunit. The 37S small subunit contains a 16S ribosomal RNA (16S mt-rRNA) and 32 different proteins. The 54S large subunit contains a 23S rRNA (23S mt-rRNA) and 42 different proteins.

Its subcellular location is the mitochondrion. Functionally, component of the mitochondrial ribosome (mitoribosome), a dedicated translation machinery responsible for the synthesis of mitochondrial genome-encoded proteins, including at least some of the essential transmembrane subunits of the mitochondrial respiratory chain. The mitoribosomes are attached to the mitochondrial inner membrane and translation products are cotranslationally integrated into the membrane. The chain is Large ribosomal subunit protein bL34m (mrpl34) from Neurospora crassa (strain ATCC 24698 / 74-OR23-1A / CBS 708.71 / DSM 1257 / FGSC 987).